Here is a 257-residue protein sequence, read N- to C-terminus: S-methyl-5'-thioadenosine phosphorylase (257 aa).

Phosphate is bound by residues Ser10, 50-51 (RH), and 83-84 (TA). Met180 contacts substrate. Thr181 provides a ligand contact to phosphate. Residue 204–206 (DYD) coordinates substrate.

It belongs to the PNP/MTAP phosphorylase family. MTAP subfamily. Homohexamer. Dimer of a homotrimer.

The catalysed reaction is S-methyl-5'-thioadenosine + phosphate = 5-(methylsulfanyl)-alpha-D-ribose 1-phosphate + adenine. It catalyses the reaction adenosine + phosphate = alpha-D-ribose 1-phosphate + adenine. Its pathway is amino-acid biosynthesis; L-methionine biosynthesis via salvage pathway; S-methyl-5-thio-alpha-D-ribose 1-phosphate from S-methyl-5'-thioadenosine (phosphorylase route): step 1/1. Functionally, catalyzes the reversible phosphorylation of S-methyl-5'-thioadenosine (MTA) to adenine and 5-methylthioribose-1-phosphate. Involved in the breakdown of MTA, a major by-product of polyamine biosynthesis. Responsible for the first step in the methionine salvage pathway after MTA has been generated from S-adenosylmethionine. Has broad substrate specificity with 6-aminopurine nucleosides as preferred substrates. Can also use adenosine as substrate to form ribose 1-phosphate. The sequence is that of S-methyl-5'-thioadenosine phosphorylase from Thermococcus kodakarensis (strain ATCC BAA-918 / JCM 12380 / KOD1) (Pyrococcus kodakaraensis (strain KOD1)).